Here is a 436-residue protein sequence, read N- to C-terminus: ATP-dependent protease ATPase subunit HslU (436 aa).

Residues isoleucine 18, 60–65 (GVGKTE), aspartate 249, glutamate 314, and arginine 386 each bind ATP.

It belongs to the ClpX chaperone family. HslU subfamily. As to quaternary structure, a double ring-shaped homohexamer of HslV is capped on each side by a ring-shaped HslU homohexamer. The assembly of the HslU/HslV complex is dependent on binding of ATP.

Its subcellular location is the cytoplasm. Functionally, ATPase subunit of a proteasome-like degradation complex; this subunit has chaperone activity. The binding of ATP and its subsequent hydrolysis by HslU are essential for unfolding of protein substrates subsequently hydrolyzed by HslV. HslU recognizes the N-terminal part of its protein substrates and unfolds these before they are guided to HslV for hydrolysis. In Ruegeria sp. (strain TM1040) (Silicibacter sp.), this protein is ATP-dependent protease ATPase subunit HslU.